The sequence spans 94 residues: Exodeoxyribonuclease 7 small subunit (94 aa).

The segment at 1–21 (MPRAPNDAPSASATPSATPAS) is disordered.

The protein belongs to the XseB family. In terms of assembly, heterooligomer composed of large and small subunits.

The protein resides in the cytoplasm. The catalysed reaction is Exonucleolytic cleavage in either 5'- to 3'- or 3'- to 5'-direction to yield nucleoside 5'-phosphates.. Bidirectionally degrades single-stranded DNA into large acid-insoluble oligonucleotides, which are then degraded further into small acid-soluble oligonucleotides. The protein is Exodeoxyribonuclease 7 small subunit of Ralstonia pickettii (strain 12J).